The primary structure comprises 542 residues: ABC transport system permease protein p69 (542 aa).

12 helical membrane-spanning segments follow: residues 23–43 (ALAIIVLVVIIYSFIDNFSGF), 77–97 (IFYVVSGSILGFVIALWFSYL), 114–134 (FTIFLRSFPVLVFAFLFNNLF), 140–160 (ATLTITWFSWLWSTKYITAFF), 212–232 (LSIAGITGIGELIATPLGGTV), 236–256 (LVLIPMLTLIGFLLFLEASVF), 287–307 (VMIYILALVLAAFTLANLVQL), 350–370 (TQAISLITLVFVLALLFGFLA), 386–406 (LLVIRVIPSVLLFRLFDPIIF), 412–432 (IIFVLAIHSAASYGQLITINF), 481–501 (LVVFGIFGGSIIGGRINNFFE), and 509–529 (GTITLPLMVYLMVFEVILMAV). One can recognise an ABC transmembrane type-1 domain in the interval 349–526 (TTQAISLITL…VYLMVFEVIL (178 aa)).

This sequence belongs to the binding-protein-dependent transport system permease family.

It localises to the cell membrane. Its function is as follows. Probably part of a high-affinity transport system. This is ABC transport system permease protein p69 (p69) from Mycoplasma pneumoniae (strain ATCC 29342 / M129 / Subtype 1) (Mycoplasmoides pneumoniae).